The chain runs to 329 residues: Ribosomal protein L11 methyltransferase (329 aa).

S-adenosyl-L-methionine contacts are provided by threonine 177, glycine 198, aspartate 220, and asparagine 264.

It belongs to the methyltransferase superfamily. PrmA family.

The protein localises to the cytoplasm. The enzyme catalyses L-lysyl-[protein] + 3 S-adenosyl-L-methionine = N(6),N(6),N(6)-trimethyl-L-lysyl-[protein] + 3 S-adenosyl-L-homocysteine + 3 H(+). In terms of biological role, methylates ribosomal protein L11. The polypeptide is Ribosomal protein L11 methyltransferase (Helicobacter pylori (strain Shi470)).